A 222-amino-acid polypeptide reads, in one-letter code: Putative O-methyltransferase MAV_1364 (222 aa).

S-adenosyl-L-methionine-binding positions include Val-49, Glu-71, 73–74, Ser-79, Asp-97, and Ile-98; that span reads GT. Position 145 (Asp-145) interacts with substrate. Residue Asp-147 coordinates S-adenosyl-L-methionine.

It belongs to the class I-like SAM-binding methyltransferase superfamily. Cation-dependent O-methyltransferase family.

The polypeptide is Putative O-methyltransferase MAV_1364 (Mycobacterium avium (strain 104)).